Reading from the N-terminus, the 102-residue chain is NADH-quinone oxidoreductase subunit K 1 (102 aa).

A run of 3 helical transmembrane segments spans residues 5–25, 31–51, and 65–85; these read LSHYLTVSAILFTLGVFGIFL, IVILMSVELILLSVNINMVAF, and LFILTVAAAEAAIGLAILVVF.

The protein belongs to the complex I subunit 4L family. NDH-1 is composed of 14 different subunits. Subunits NuoA, H, J, K, L, M, N constitute the membrane sector of the complex.

Its subcellular location is the cell inner membrane. The catalysed reaction is a quinone + NADH + 5 H(+)(in) = a quinol + NAD(+) + 4 H(+)(out). Functionally, NDH-1 shuttles electrons from NADH, via FMN and iron-sulfur (Fe-S) centers, to quinones in the respiratory chain. The immediate electron acceptor for the enzyme in this species is believed to be ubiquinone. Couples the redox reaction to proton translocation (for every two electrons transferred, four hydrogen ions are translocated across the cytoplasmic membrane), and thus conserves the redox energy in a proton gradient. The polypeptide is NADH-quinone oxidoreductase subunit K 1 (Rhizobium etli (strain CIAT 652)).